A 265-amino-acid chain; its full sequence is uncharacterized protein (265 aa).

This sequence belongs to the MG067/MG068/MG395 family.

This is an uncharacterized protein from Mycoplasma pneumoniae (strain ATCC 29342 / M129 / Subtype 1) (Mycoplasmoides pneumoniae).